Reading from the N-terminus, the 200-residue chain is Small ribosomal subunit protein uS4c (200 aa).

The S4 RNA-binding domain occupies 88–148 (IRLDNTIFNL…PKSYYIFKLC (61 aa)).

The protein belongs to the universal ribosomal protein uS4 family. Part of the 30S ribosomal subunit.

Its subcellular location is the plastid. It is found in the apicoplast. One of the primary rRNA binding proteins, it binds directly to 16S rRNA where it nucleates assembly of the body of the 30S subunit. The protein is Small ribosomal subunit protein uS4c (rps4) of Eimeria tenella (Coccidian parasite).